The sequence spans 285 residues: Nucleotide-binding protein PFLU_0879 (285 aa).

8–15 (GRSGSGKS) is an ATP binding site. 60 to 63 (DARN) lines the GTP pocket.

The protein belongs to the RapZ-like family.

Functionally, displays ATPase and GTPase activities. In Pseudomonas fluorescens (strain SBW25), this protein is Nucleotide-binding protein PFLU_0879.